The following is a 466-amino-acid chain: Amidase (466 aa).

Residues Lys-79 and Ser-148 each act as charge relay system in the active site. A disordered region spans residues 128–152 (YGRITPKSRNPRDPGRTPGGSSGGS). Residue Ser-172 is the Acyl-ester intermediate of the active site.

This sequence belongs to the amidase family.

The enzyme catalyses a monocarboxylic acid amide + H2O = a monocarboxylate + NH4(+). This chain is Amidase, found in Pseudomonas putida (Arthrobacter siderocapsulatus).